Reading from the N-terminus, the 383-residue chain is Probable arabinan endo-1,5-alpha-L-arabinosidase D (383 aa).

The first 22 residues, 1–22 (MVHITLPGLLLCLCLYLSVAPA), serve as a signal peptide directing secretion. The active-site Proton acceptor is Asp49. Asn75, Asn163, and Asn206 each carry an N-linked (GlcNAc...) asparagine glycan. The active-site Proton donor is the Glu227. Asn325 carries an N-linked (GlcNAc...) asparagine glycan. Asn356 carries GPI-anchor amidated asparagine lipidation. Positions 357–383 (PGNSLQPPSSVSLQIVAFLCLVILFTL) are cleaved as a propeptide — removed in mature form.

Belongs to the glycosyl hydrolase 43 family.

Its subcellular location is the cell membrane. The catalysed reaction is Endohydrolysis of (1-&gt;5)-alpha-arabinofuranosidic linkages in (1-&gt;5)-arabinans.. Its pathway is glycan metabolism; L-arabinan degradation. Endo-1,5-alpha-L-arabinanase involved in degradation of pectin. Its preferred substrate is linear 1,5-alpha-L-arabinan. This Emericella nidulans (strain FGSC A4 / ATCC 38163 / CBS 112.46 / NRRL 194 / M139) (Aspergillus nidulans) protein is Probable arabinan endo-1,5-alpha-L-arabinosidase D (abnD).